Reading from the N-terminus, the 206-residue chain is Large ribosomal subunit protein uL4 (206 aa).

A disordered region spans residues 48-97; sequence THAVKNRSLVSGGGKKPWKQKHTGRARQGSTRASQWVGGGKAMGPKPRDY. Residues 63–72 show a composition bias toward basic residues; it reads KPWKQKHTGR.

It belongs to the universal ribosomal protein uL4 family. In terms of assembly, part of the 50S ribosomal subunit.

One of the primary rRNA binding proteins, this protein initially binds near the 5'-end of the 23S rRNA. It is important during the early stages of 50S assembly. It makes multiple contacts with different domains of the 23S rRNA in the assembled 50S subunit and ribosome. In terms of biological role, forms part of the polypeptide exit tunnel. The sequence is that of Large ribosomal subunit protein uL4 from Anaeromyxobacter dehalogenans (strain 2CP-1 / ATCC BAA-258).